The chain runs to 275 residues: Large ribosomal subunit protein uL2c (275 aa).

The disordered stretch occupies residues 224–275 (AMNPVDHPHGGGEGRTPIGRKKPVTPWGYSALGKKSRKRNRYSDASILRRRE).

Belongs to the universal ribosomal protein uL2 family. Part of the 50S ribosomal subunit.

It is found in the plastid. Its subcellular location is the chloroplast. The protein is Large ribosomal subunit protein uL2c (rpl2) of Picea abies (Norway spruce).